Reading from the N-terminus, the 782-residue chain is MMSNLVEPSWRLLAASGGDTVKLFDVSADSGDPCVLSYTPSPGCAVNSVKWNHTNLVVASTGEDKKISLWRKNGQSLGTVPVTGKDGGDSAEECLSAISFSKKGSRYICSGGTGQIVKIWDLQRKLCIKKLKGHTSTITGVMYNCKDEHLASVSVGGDLIVHNLASGARATELKDPNGQVLRLLDYSRSSRHLLVTAGDDGTVHLWDTTGRSPKMSWLKQHSAPTAGVCFSPSNEKIIASVGMDKKLYTYDSGSRRSSSCIAYEAPFSSLAFGDNGYILVAGTSNGRVVFYDIRGKPQPVTVLHAFSNSEDVTSLSWQTSKPVIVNEKNYTSEMALLGSTVEDSVVIPDPLPSTTPSASQSAMAPGSRGVSASTVNASSVEQTPNRNHLWPSGPLGRLHALRANDSYNDDMGVFSPIIDVSSVEKWADSEGYNNKDHLVVDNKPSSLLFPSSSKGYSFGDNGSKEHPIFDWKPSSTSKQDDPRAAFSSFGSITPTASSKSEDSALTPPEAWGGDKFSEKFNQLANEKFSDKFSHLHAPSRLAVSSTGASTSGSMFSSSRDFPLSHGQTNFANASLEFPRIRDFSSTFETSSTQTDNNLPSSPLFTKGITAPGNIDSLRLSPNFTRRFSTYAERISTTSSFSDGASLSLGGSPKIKKTGSETREEVLNHLLARPETVVATEAGAMPLMNQGGLKQSQTDQQQVMGSSNFTLQLFQRTLEGTLDSFQNSIHDDVRNLHIEILRQFHMHEMEMSKVLSSILENQAEQMKELKLLRKENQELRQRL.

WD repeat units lie at residues 1–34 (MMSNLVEPSWRLLAASGGDTVKLFDVSADSGDPC), 41–80 (SPGCAVNSVKWNHTNLVVASTGEDKKISLWRKNGQSLGTV), 90–130 (SAEE…CIKK), 133–172 (GHTSTITGVMYNCKDEHLASVSVGGDLIVHNLASGARATE), 176–216 (PNGQ…PKMS), 220–260 (QHSA…SSSC), 262–301 (AYEAPFSSLAFGDNGYILVAGTSNGRVVFYDIRGKPQPVT), and 307–358 (SNSE…TPSA). Disordered stretches follow at residues 350–393 (PLPS…WPSG) and 467–512 (PIFD…EAWG). Polar residues-rich tracts occupy residues 352–362 (PSTTPSASQSA), 370–386 (VSASTVNASSVEQTPNR), and 488–498 (SFGSITPTASS). Positions 753 to 782 (VLSSILENQAEQMKELKLLRKENQELRQRL) form a coiled coil.

In terms of tissue distribution, expressed in root meristematic cells.

The protein resides in the nucleus envelope. It is found in the chromosome. The protein localises to the centromere. It localises to the kinetochore. Its subcellular location is the cytoplasm. The protein resides in the cytoskeleton. It is found in the phragmoplast. The protein localises to the microtubule organizing center. In terms of biological role, regulates microtubules organization in a centrosome-independent manner. Required for the spindle to be positioned correctly and for the function of gamma-tubulin in organizing phragmoplast microtubules. Component of active gamma-tubulin ring complexes (gamma-TuRCs) associated with cortical microtubules in interphase cells. Mediates gamma-TuRC recruitment to the nucleation sites and is important for determining the ratio of branched to parallel nucleation. May mediate the localization of GCP2 and GCP3 to the nuclear envelope. In Arabidopsis thaliana (Mouse-ear cress), this protein is Protein NEDD1.